Consider the following 306-residue polypeptide: SDS degradation transcriptional activation protein (306 aa).

One can recognise an HTH lysR-type domain in the interval 1 to 59 (MNDLRQLRHFVALAEHGHFARAAEAVNLSQPALSRSIQALENGLGCRLLDRGPRQVSLT). The segment at residues 19–38 (FARAAEAVNLSQPALSRSIQ) is a DNA-binding region (H-T-H motif).

It belongs to the LysR transcriptional regulatory family.

Functionally, activates the transcription of the sdsA gene for sodium dodecyl sulfate (SDS) degradation. The sequence is that of SDS degradation transcriptional activation protein (sdsB) from Pseudomonas sp. (strain ATCC 19151).